The primary structure comprises 128 residues: Fluoride-specific ion channel FluC (128 aa).

The next 4 membrane-spanning stretches (helical) occupy residues 7–27 (AVLLVGAGGFAGASARYLIAV), 34–54 (TGFPMATMLVNVLGCFLIGMI), 70–90 (LLLATGFCGGFTTFSSYMYEI), and 104–124 (LYLIGSLVGGMVFLYLGMALA). Residues G78 and T81 each contribute to the Na(+) site.

This sequence belongs to the fluoride channel Fluc/FEX (TC 1.A.43) family.

It localises to the cell inner membrane. It catalyses the reaction fluoride(in) = fluoride(out). With respect to regulation, na(+) is not transported, but it plays an essential structural role and its presence is essential for fluoride channel function. Its function is as follows. Fluoride-specific ion channel. Important for reducing fluoride concentration in the cell, thus reducing its toxicity. The chain is Fluoride-specific ion channel FluC from Prosthecochloris aestuarii (strain DSM 271 / SK 413).